The following is a 1605-amino-acid chain: Kinesin-like protein klp-12 (1605 aa).

Residues 5-358 (CVQVALRIRP…MKYANRAKEI (354 aa)) enclose the Kinesin motor domain. ATP is bound at residue 84–91 (GQTGSGKT). The Mg(2+) site is built by Thr91 and Ser217. Disordered regions lie at residues 548 to 596 (GENV…EESE), 1085 to 1152 (VSDA…SNNN), and 1198 to 1232 (SRSNLMSSSSSTTTTTLSSSNLLNPRGTTSSSSSK). Residues 550–559 (NVSSEYSSMA) are compositionally biased toward polar residues. Acidic residues predominate over residues 560–596 (QDEDGTSNEAEELLDEEDLDEDEDETAEEKQEQEESE). The stretch at 575 to 730 (EEDLDEDEDE…KKAKVELIKK (156 aa)) forms a coiled coil. Residues 1116–1152 (VSTSPASTSFANSTSQSPSFSRNTRFRSTVGGVSNNN) show a composition bias toward polar residues. A compositionally biased stretch (low complexity) spans 1200-1232 (SNLMSSSSSTTTTTLSSSNLLNPRGTTSSSSSK). WD repeat units lie at residues 1282–1319 (GHARGVLSVDVNEKLMVTGSKDRTAKLWDIEACREIRT), 1389–1427 (FLETLITAADVDPTGQLLFTSFSAYVRVWNLREWKPLGR), 1525–1566 (AHQQ…RMKL), and 1573–1605 (AHQEGINDMCSTKSMLFTASGDSTVGFWKSNAV).

Belongs to the TRAFAC class myosin-kinesin ATPase superfamily. Kinesin family. As to quaternary structure, component of a complex at least composed of alpha tubulin and beta tubulin. Within the complex, interacts with the alpha tubulin and beta tubulin dimer.

The protein localises to the cytoplasm. The protein resides in the cytoskeleton. In terms of biological role, microtubule-binding motor protein which has ATPase activity. In complex with alpha and beta tubulins, preferentially binds to the growing microtubule plus-end to stabilize it and detaches following ATP hydrolysis. Negatively regulates axonal length through inhibiting microtubule polymerization at its plus-end. This Caenorhabditis elegans protein is Kinesin-like protein klp-12.